An 854-amino-acid polypeptide reads, in one-letter code: DNA mismatch repair protein MutS (854 aa).

Residues 1-21 are disordered; it reads MTASDIQPTEPHTPPTPHADT. 658–665 contacts ATP; the sequence is GPNASGKS.

It belongs to the DNA mismatch repair MutS family.

Its function is as follows. This protein is involved in the repair of mismatches in DNA. It is possible that it carries out the mismatch recognition step. This protein has a weak ATPase activity. This chain is DNA mismatch repair protein MutS, found in Trichormus variabilis (strain ATCC 29413 / PCC 7937) (Anabaena variabilis).